A 117-amino-acid polypeptide reads, in one-letter code: Large ribosomal subunit protein bL20c (117 aa).

It belongs to the bacterial ribosomal protein bL20 family.

It localises to the plastid. The protein resides in the chloroplast. In terms of biological role, binds directly to 23S ribosomal RNA and is necessary for the in vitro assembly process of the 50S ribosomal subunit. It is not involved in the protein synthesizing functions of that subunit. The sequence is that of Large ribosomal subunit protein bL20c from Eucalyptus globulus subsp. globulus (Tasmanian blue gum).